We begin with the raw amino-acid sequence, 107 residues long: Ig kappa chain V-VI region NQ2-17.4.1 (107 aa).

The tract at residues 1 to 23 is framework-1; that stretch reads QIVLTQSPAIMSASPGQKVTMTC. Cys-23 and Cys-87 are oxidised to a cystine. A complementarity-determining-1 region spans residues 24 to 33; sequence SASSSVSYMH. The framework-2 stretch occupies residues 34–48; it reads WYQQKSGTSPKRWIY. The complementarity-determining-2 stretch occupies residues 49-55; it reads DTSKLAS. Residues 56–87 are framework-3; the sequence is GVPARFSGSGSATSYSLTITSMQAEDAATYYC. The tract at residues 88 to 96 is complementarity-determining-3; that stretch reads QQWSSNPLT. The interval 97–106 is framework-4; it reads FGAGTKLELK.

In terms of biological role, anti-2-phenyl oxazolone (PHOX) Antibody. The protein is Ig kappa chain V-VI region NQ2-17.4.1 of Mus musculus (Mouse).